Reading from the N-terminus, the 146-residue chain is Fluoride-specific ion channel FluC (146 aa).

A run of 4 helical transmembrane segments spans residues 8 to 28, 47 to 67, 91 to 111, and 121 to 141; these read FAIALGGSIGAVLRYLITLTV, LANLLGCCALGGLFQFSQALV, IGVLGSLTTFSTLIGETAVFA, and MLLGINVIAGWCLFWAAAAVV. Na(+) contacts are provided by G95 and T98.

It belongs to the fluoride channel Fluc/FEX (TC 1.A.43) family.

The protein localises to the cell inner membrane. The catalysed reaction is fluoride(in) = fluoride(out). Its activity is regulated as follows. Na(+) is not transported, but it plays an essential structural role and its presence is essential for fluoride channel function. Fluoride-specific ion channel. Important for reducing fluoride concentration in the cell, thus reducing its toxicity. The sequence is that of Fluoride-specific ion channel FluC from Rhodopirellula baltica (strain DSM 10527 / NCIMB 13988 / SH1).